A 251-amino-acid chain; its full sequence is Vitamin B12 import ATP-binding protein BtuD (251 aa).

Positions 2–236 (IRVNSLQVDS…EVLQSVFGTS (235 aa)) constitute an ABC transporter domain. An ATP-binding site is contributed by 30 to 37 (GPNGCGKS).

The protein belongs to the ABC transporter superfamily. Vitamin B12 importer (TC 3.A.1.13.1) family. The complex is composed of two ATP-binding proteins (BtuD), two transmembrane proteins (BtuC) and a solute-binding protein (BtuF).

The protein localises to the cell inner membrane. The catalysed reaction is an R-cob(III)alamin(out) + ATP + H2O = an R-cob(III)alamin(in) + ADP + phosphate + H(+). Functionally, part of the ABC transporter complex BtuCDF involved in vitamin B12 import. Responsible for energy coupling to the transport system. The polypeptide is Vitamin B12 import ATP-binding protein BtuD (Vibrio cholerae serotype O1 (strain ATCC 39315 / El Tor Inaba N16961)).